A 289-amino-acid chain; its full sequence is Inorganic pyrophosphatase (289 aa).

Residue Ser-2 is modified to N-acetylserine. Lys-57 is subject to N6-acetyllysine. Mg(2+)-binding residues include Asp-116, Asp-121, and Asp-153. Ser-250 carries the post-translational modification Phosphoserine.

It belongs to the PPase family. As to quaternary structure, homodimer. Mg(2+) serves as cofactor. Post-translationally, the N-terminus is blocked. As to expression, highest levels are found in retinal rod outer segments.

It localises to the cytoplasm. The enzyme catalyses diphosphate + H2O = 2 phosphate + H(+). The protein is Inorganic pyrophosphatase (PPA1) of Bos taurus (Bovine).